The chain runs to 1424 residues: S-layer protein A (1424 aa).

The signal sequence occupies residues M1–A24. 28 N-linked (GlcNAc...) asparagine glycosylation sites follow: N60, N70, N276, N295, N342, N358, N377, N468, N517, N545, N559, N581, N633, N714, N875, N914, N955, N989, N1018, N1042, N1093, N1134, N1197, N1217, N1252, N1276, N1304, and N1419.

It belongs to the Sulfolobales SlaA family. The mushroom-shaped unit cells of the Sulfolobales' S-layers may consist of three SlaB subunits and six SlaA subunits. Glycosylated. C-terminal glycosylation sites are modified with a heterogeneous family of glycans, with the largest having a composition Glc(1)Man(2)GlcNAc(2) plus 6-sulfoquinovose (QuiS).

Its subcellular location is the secreted. It is found in the cell wall. The protein localises to the S-layer. Its function is as follows. S-layer large protein. May form the highly ordered outer sheath. This is S-layer protein A from Sulfolobus acidocaldarius (strain ATCC 33909 / DSM 639 / JCM 8929 / NBRC 15157 / NCIMB 11770).